Here is a 127-residue protein sequence, read N- to C-terminus: Riboflavin kinase (127 aa).

10 to 15 (GLGEGR) contributes to the CDP binding site. Positions 39 and 41 each coordinate Mg(2+). FMN contacts are provided by Thr96 and Glu104. A CDP-binding site is contributed by 109–112 (VHLR).

Belongs to the archaeal riboflavin kinase family. The cofactor is Mg(2+).

It carries out the reaction riboflavin + CTP = CDP + FMN + H(+). It participates in cofactor biosynthesis; FMN biosynthesis; FMN from riboflavin (CTP route): step 1/1. In terms of biological role, catalyzes the CTP-dependent phosphorylation of riboflavin (vitamin B2) to form flavin mononucleotide (FMN). The polypeptide is Riboflavin kinase (Methanococcus maripaludis (strain C7 / ATCC BAA-1331)).